The primary structure comprises 253 residues: MARMVRRNRKIVNYSEFGDFEDGDEDFACIAAPLTKKSRTQPKEPKKENKKKQKTQKEFTSSQKQSPIGRTSLDDSFCERDLNVTLALSIKEKSANILEVQNSKEQGQVLDDDIPRNGCRQWTAASKAFSHQKLLTIDSCDREHVTDSEPVTIPDEESEEDSDYREGNDEDCAMEKMKINGMKKKIKRQTRKEKKTPKSENNTTVMELKSEQTQKMMSTSSEPVGRPLYTSSPVTNKKPKWVPPGRACAVSFL.

Residues 32–51 (APLTKKSRTQPKEPKKENKK) form an interaction with DNA region. 3 disordered regions span residues 33-74 (PLTK…TSLD), 141-169 (DREHVTDSEPVTIPDEESEEDSDYREGND), and 184-244 (KKIK…WVPP). Acidic residues predominate over residues 154–169 (PDEESEEDSDYREGND). Residues 184-195 (KKIKRQTRKEKK) show a composition bias toward basic residues. The interaction with DNA stretch occupies residues 190–241 (TRKEKKTPKSENNTTVMELKSEQTQKMMSTSSEPVGRPLYTSSPVTNKKPKW). Positions 199-222 (SENNTTVMELKSEQTQKMMSTSSE) are enriched in polar residues.

As to quaternary structure, monomer.

It localises to the chromosome. Its subcellular location is the nucleus. Functionally, structure-specific DNA-binding protein involved in DNA repair by promoting RAD51-mediated homologous recombination. Acts by stimulating D-Loop formation by RAD51: specifically enhances joint molecule formation through its structure-specific DNA interaction and its interaction with RAD51. Binds single-stranded DNA (ssDNA), double-stranded DNA (dsDNA) and secondary DNA structures, such as D-loop structures: has a strong preference for branched-DNA structures that are obligatory intermediates during joint molecule formation. Involved in mitotic recombination-dependent replication fork processing. Also involved in meiosis by promoting DMC1-mediated homologous meiotic recombination. This chain is RAD51-associated protein 1, found in Gallus gallus (Chicken).